Reading from the N-terminus, the 280-residue chain is Pantothenate synthetase (280 aa).

30–37 lines the ATP pocket; the sequence is MGYLHEGH. Histidine 37 functions as the Proton donor in the catalytic mechanism. Glutamine 61 is a (R)-pantoate binding site. Glutamine 61 is a binding site for beta-alanine. 147-150 provides a ligand contact to ATP; sequence GKKD. Residue glutamine 153 coordinates (R)-pantoate. ATP is bound by residues valine 176 and 184–187; that span reads MSSR.

Belongs to the pantothenate synthetase family. In terms of assembly, homodimer.

It localises to the cytoplasm. It carries out the reaction (R)-pantoate + beta-alanine + ATP = (R)-pantothenate + AMP + diphosphate + H(+). Its pathway is cofactor biosynthesis; (R)-pantothenate biosynthesis; (R)-pantothenate from (R)-pantoate and beta-alanine: step 1/1. Its function is as follows. Catalyzes the condensation of pantoate with beta-alanine in an ATP-dependent reaction via a pantoyl-adenylate intermediate. The protein is Pantothenate synthetase of Sulfurihydrogenibium sp. (strain YO3AOP1).